Reading from the N-terminus, the 119-residue chain is Large ribosomal subunit protein bL19 (119 aa).

Belongs to the bacterial ribosomal protein bL19 family.

In terms of biological role, this protein is located at the 30S-50S ribosomal subunit interface and may play a role in the structure and function of the aminoacyl-tRNA binding site. The sequence is that of Large ribosomal subunit protein bL19 from Sulfurovum sp. (strain NBC37-1).